The following is a 317-amino-acid chain: tRNA dimethylallyltransferase (317 aa).

14 to 21 (GPTAVGKT) is an ATP binding site. 16-21 (TAVGKT) contacts substrate. Positions 39–42 (DSMQ) are interaction with substrate tRNA.

Belongs to the IPP transferase family. As to quaternary structure, monomer. Mg(2+) is required as a cofactor.

The enzyme catalyses adenosine(37) in tRNA + dimethylallyl diphosphate = N(6)-dimethylallyladenosine(37) in tRNA + diphosphate. In terms of biological role, catalyzes the transfer of a dimethylallyl group onto the adenine at position 37 in tRNAs that read codons beginning with uridine, leading to the formation of N6-(dimethylallyl)adenosine (i(6)A). The protein is tRNA dimethylallyltransferase of Bacillus cereus (strain Q1).